Reading from the N-terminus, the 792-residue chain is Phenylalanine--tRNA ligase beta subunit (792 aa).

The 109-residue stretch at 39-147 (ARTLEKVVVG…ADAPIGKNIQ (109 aa)) folds into the tRNA-binding domain. Positions 400 to 475 (PKIPRIILRP…HLYGYDRIPQ (76 aa)) constitute a B5 domain. The Mg(2+) site is built by Asp453, Asp459, Glu462, and Glu463. Positions 697 to 791 (SKFPSIRRDI…LERKFNAKLR (95 aa)) constitute an FDX-ACB domain.

It belongs to the phenylalanyl-tRNA synthetase beta subunit family. Type 1 subfamily. As to quaternary structure, tetramer of two alpha and two beta subunits. It depends on Mg(2+) as a cofactor.

It is found in the cytoplasm. The enzyme catalyses tRNA(Phe) + L-phenylalanine + ATP = L-phenylalanyl-tRNA(Phe) + AMP + diphosphate + H(+). This Coxiella burnetii (strain RSA 493 / Nine Mile phase I) protein is Phenylalanine--tRNA ligase beta subunit.